A 901-amino-acid chain; its full sequence is HTH-type transcriptional regulator MalT (901 aa).

39–46 (SPAGYGKT) provides a ligand contact to ATP. The region spanning 829–894 (ELIRTSPLTQ…DAVQHAQQLL (66 aa)) is the HTH luxR-type domain. The segment at residues 853 to 872 (NEQIAGELAVAATTIKTHIR) is a DNA-binding region (H-T-H motif).

Belongs to the MalT family. As to quaternary structure, monomer in solution. Oligomerizes to an active state in the presence of the positive effectors ATP and maltotriose.

Activated by ATP and maltotriose, which are both required for DNA binding. Its function is as follows. Positively regulates the transcription of the maltose regulon whose gene products are responsible for uptake and catabolism of malto-oligosaccharides. Specifically binds to the promoter region of its target genes, recognizing a short DNA motif called the MalT box. The sequence is that of HTH-type transcriptional regulator MalT from Salmonella typhimurium (strain LT2 / SGSC1412 / ATCC 700720).